Consider the following 151-residue polypeptide: Aspartate carbamoyltransferase regulatory chain (151 aa).

Cys108, Cys113, Cys138, and Cys141 together coordinate Zn(2+).

Belongs to the PyrI family. In terms of assembly, contains catalytic and regulatory chains. It depends on Zn(2+) as a cofactor.

Involved in allosteric regulation of aspartate carbamoyltransferase. The sequence is that of Aspartate carbamoyltransferase regulatory chain from Pyrobaculum arsenaticum (strain DSM 13514 / JCM 11321 / PZ6).